Here is a 421-residue protein sequence, read N- to C-terminus: Type II methyltransferase M.TaqI (421 aa).

The segment covering 1-18 (MGLPPLLSLPSNSAPRSL) has biased composition (low complexity). The interval 1 to 20 (MGLPPLLSLPSNSAPRSLGR) is disordered. S-adenosyl-L-methionine is bound by residues Thr23, 45-48 (EPAC), Glu71, Asp89, and Pro107.

Belongs to the N(4)/N(6)-methyltransferase family.

It carries out the reaction a 2'-deoxyadenosine in DNA + S-adenosyl-L-methionine = an N(6)-methyl-2'-deoxyadenosine in DNA + S-adenosyl-L-homocysteine + H(+). A gamma subtype methylase that recognizes the double-stranded sequence 5'-TCGA-3', methylates A-4 on both strands and protects the DNA from cleavage by the TaqI endonuclease. This is Type II methyltransferase M.TaqI (taqIM) from Thermus aquaticus.